The chain runs to 316 residues: Probable cobalamin biosynthesis protein CobD (316 aa).

The next 5 membrane-spanning stretches (helical) occupy residues methionine 1–leucine 21, isoleucine 50–leucine 70, isoleucine 89–isoleucine 109, proline 165–phenylalanine 185, and isoleucine 294–leucine 314.

Belongs to the CobD/CbiB family.

The protein resides in the cell membrane. It functions in the pathway cofactor biosynthesis; adenosylcobalamin biosynthesis. Converts cobyric acid to cobinamide by the addition of aminopropanol on the F carboxylic group. The sequence is that of Probable cobalamin biosynthesis protein CobD from Methanothrix thermoacetophila (strain DSM 6194 / JCM 14653 / NBRC 101360 / PT) (Methanosaeta thermophila).